The chain runs to 422 residues: UPF0229 protein SO_2883 (422 aa).

A disordered region spans residues 60 to 111 (SEPMFHQGKGGVRDRVHPGNDQFTRGDKIDRPQGGSGGGAGKGDASDSGEGN). Residues 70–90 (GVRDRVHPGNDQFTRGDKIDR) are compositionally biased toward basic and acidic residues.

Belongs to the UPF0229 family.

The polypeptide is UPF0229 protein SO_2883 (Shewanella oneidensis (strain ATCC 700550 / JCM 31522 / CIP 106686 / LMG 19005 / NCIMB 14063 / MR-1)).